Consider the following 494-residue polypeptide: Ceramide glucosyltransferase (494 aa).

The Lumenal segment spans residues 1-6 (MPLLMD). A helical transmembrane segment spans residues 7–27 (GLAYAGAIWSLIVFCVQAIGL). Residues 28-337 (YQLFRSYSRP…VRWLRVRKWT (310 aa)) lie on the Cytoplasmic side of the membrane. A short sequence motif (D1) is located at residue Asp-95. Position 160 (Asp-160) is a short sequence motif, D2. Asp-285 is a short sequence motif (D3). The Proton acceptor role is filled by Asp-285. A (Q/R)XXRW motif is present at residues 326–330 (RRVRW). The chain crosses the membrane as a helical span at residues 338–358 (VLLATLVEPGVESMVCCMAFA). Residues 359-380 (HALTTTPWCPNPADWPIPHTWT) lie on the Lumenal side of the membrane. The helical transmembrane segment at 381-401 (ALWSIWLAAIAVWATLDYVVY) threads the bilayer. The Cytoplasmic segment spans residues 402 to 428 (HFLHSCRSIEKDADSPDFAQGNELMKR). The chain crosses the membrane as a helical span at residues 429-449 (PFGAWILAWIGREILALPIWT). Residues 450–494 (RAVLLGTTVTWRGTKFKVRPDQSVVDIPNAGAKSNGIGSTNRKVR) are Lumenal-facing.

The protein belongs to the glycosyltransferase 2 family.

It is found in the golgi apparatus membrane. The enzyme catalyses an N-acylsphing-4-enine + UDP-alpha-D-glucose = a beta-D-glucosyl-(1&lt;-&gt;1')-N-acylsphing-4-enine + UDP + H(+). It functions in the pathway lipid metabolism; sphingolipid metabolism. Its function is as follows. Catalyzes the final step in the biosynthesis of the membrane lipid glucosylceramide (GluCer), the transfer of glucose to ceramide. Glucosylceramides play important roles in growth, differentiation and pathogenicity. The chain is Ceramide glucosyltransferase from Pyricularia oryzae (strain 70-15 / ATCC MYA-4617 / FGSC 8958) (Rice blast fungus).